A 115-amino-acid polypeptide reads, in one-letter code: Putative type I restriction enzyme MpnIIP endonuclease subunit middle part (115 aa).

Its function is as follows. The middle section of a putative type I restriction enzyme that if reconstituted might recognize 5'-GAN(7)TAY-3' and cleave a random distance away. Subunit R is required for both nuclease and ATPase activities, but not for modification. This is Putative type I restriction enzyme MpnIIP endonuclease subunit middle part from Mycoplasma pneumoniae (strain ATCC 29342 / M129 / Subtype 1) (Mycoplasmoides pneumoniae).